A 200-amino-acid polypeptide reads, in one-letter code: Small heat shock protein hspG2 (200 aa).

Positions 33 to 200 (NKRIDIIPSM…DNFQIKLKSI (168 aa)) constitute a sHSP domain. The disordered stretch occupies residues 86 to 139 (KLQQQQQQQSEKSSQSTNNKDDDEPSIEEYEDDTKLKSNLNKNTENKDENKTTS). Low complexity predominate over residues 88–101 (QQQQQQQSEKSSQS). The span at 106–117 (DDDEPSIEEYED) shows a compositional bias: acidic residues.

The protein belongs to the small heat shock protein (HSP20) family.

In Dictyostelium discoideum (Social amoeba), this protein is Small heat shock protein hspG2 (hspG2).